Reading from the N-terminus, the 121-residue chain is Small ribosomal subunit protein uS13 (121 aa).

Residues 94–121 (RGLPVRGQSTKNNARTRKGPKRTVGAKR) form a disordered region. The span at 107 to 121 (ARTRKGPKRTVGAKR) shows a compositional bias: basic residues.

Belongs to the universal ribosomal protein uS13 family. As to quaternary structure, part of the 30S ribosomal subunit. Forms a loose heterodimer with protein S19. Forms two bridges to the 50S subunit in the 70S ribosome.

In terms of biological role, located at the top of the head of the 30S subunit, it contacts several helices of the 16S rRNA. In the 70S ribosome it contacts the 23S rRNA (bridge B1a) and protein L5 of the 50S subunit (bridge B1b), connecting the 2 subunits; these bridges are implicated in subunit movement. Contacts the tRNAs in the A and P-sites. This is Small ribosomal subunit protein uS13 from Natranaerobius thermophilus (strain ATCC BAA-1301 / DSM 18059 / JW/NM-WN-LF).